The sequence spans 108 residues: Large ribosomal subunit protein eL33A (108 aa).

Belongs to the eukaryotic ribosomal protein eL33 family. In terms of assembly, component of the large ribosomal subunit (LSU). Mature yeast ribosomes consist of a small (40S) and a large (60S) subunit. The 40S small subunit contains 1 molecule of ribosomal RNA (18S rRNA) and at least 33 different proteins. The large 60S subunit contains 3 rRNA molecules (25S, 5.8S and 5S rRNA) and at least 46 different proteins.

Its subcellular location is the cytoplasm. It localises to the nucleus. The protein localises to the nucleolus. In terms of biological role, component of the ribosome, a large ribonucleoprotein complex responsible for the synthesis of proteins in the cell. The small ribosomal subunit (SSU) binds messenger RNAs (mRNAs) and translates the encoded message by selecting cognate aminoacyl-transfer RNA (tRNA) molecules. The large subunit (LSU) contains the ribosomal catalytic site termed the peptidyl transferase center (PTC), which catalyzes the formation of peptide bonds, thereby polymerizing the amino acids delivered by tRNAs into a polypeptide chain. The nascent polypeptides leave the ribosome through a tunnel in the LSU and interact with protein factors that function in enzymatic processing, targeting, and the membrane insertion of nascent chains at the exit of the ribosomal tunnel. The protein is Large ribosomal subunit protein eL33A (rpl35b) of Schizosaccharomyces pombe (strain 972 / ATCC 24843) (Fission yeast).